Reading from the N-terminus, the 83-residue chain is RNA-binding protein Hfq (83 aa).

In terms of domain architecture, Sm spans D9–V68.

The protein belongs to the Hfq family. As to quaternary structure, homohexamer.

Its function is as follows. RNA chaperone that binds small regulatory RNA (sRNAs) and mRNAs to facilitate mRNA translational regulation in response to envelope stress, environmental stress and changes in metabolite concentrations. Also binds with high specificity to tRNAs. The chain is RNA-binding protein Hfq from Marinobacter nauticus (strain ATCC 700491 / DSM 11845 / VT8) (Marinobacter aquaeolei).